Reading from the N-terminus, the 968-residue chain is Catenin delta-1 (968 aa).

Met-1 is subject to N-acetylmethionine. The interval 1–357 is necessary and sufficient for interaction with CCDC85B; sequence MDDSEVESTA…ASLDSLRKGG (357 aa). A Phosphoserine modification is found at Ser-4. A coiled-coil region spans residues 10–46; it reads ASILASVKEQEAQFEKLTRALEEERRHVSAQLERVRV. Position 47 is a phosphoserine (Ser-47). Thr-59 is modified (phosphothreonine). The residue at position 112 (Tyr-112) is a Phosphotyrosine; by FYN. Ser-125 is modified (phosphoserine). 2 positions are modified to phosphotyrosine: Tyr-217 and Tyr-221. Ser-225 carries the phosphoserine modification. At Tyr-228 the chain carries Phosphotyrosine. 2 positions are modified to phosphoserine: Ser-230 and Ser-252. Residue Tyr-257 is modified to Phosphotyrosine. A phosphoserine mark is found at Ser-268 and Ser-269. Tyr-280 is subject to Phosphotyrosine. Ser-288 bears the Phosphoserine; by PAK5 mark. Residue Tyr-291 is modified to Phosphotyrosine. Residues 299 to 306 carry the Nuclear localization signal (NLS) motif; the sequence is MSDYGTAR. Phosphoserine is present on Ser-300. Thr-304 carries the phosphothreonine modification. Phosphoserine is present on residues Ser-320, Ser-346, Ser-349, and Ser-352. ARM repeat units lie at residues 358-395, 398-437, 441-475, and 476-516; these read PPPP…HLCY, DKVK…NISF, QDNK…ITGT, and LWNL…NEDC. Lys-421 participates in a covalent cross-link: Glycyl lysine isopeptide (Lys-Gly) (interchain with G-Cter in SUMO2). Residue Lys-517 forms a Glycyl lysine isopeptide (Lys-Gly) (interchain with G-Cter in SUMO2) linkage. The Nuclear localization signal (NLS) motif lies at 521-528; the sequence is IEWESVLT. ARM repeat units follow at residues 534-573, 583-624, 653-693, 700-739, 740-780, and 781-826; these read LRNV…DSDS, LRNL…AKKG, ARGY…NLCA, RYIR…NLAV, DARN…SILN, and TINE…ALVL. Phosphothreonine occurs at positions 566, 572, 587, and 593. A Nuclear localization signal (NLS) motif is present at residues 568–575; it reads QKDSDSKL. A Phosphoserine modification is found at Ser-617. Positions 622–629 match the Nuclear localization signal (NLS) motif; that stretch reads KKGKDEWF. Ser-713 carries the post-translational modification Phosphoserine. Glu-788, Lys-794, and Asn-809 each carry phosphothreonine. Ser-811 carries the post-translational modification Phosphoserine. 3 positions are modified to phosphothreonine: Ser-815, Leu-835, and Lys-841. Ser-847 carries the phosphoserine modification. Residues 855–944 form a disordered region; that stretch reads NASRSQSSHS…LMQDEGQESL (90 aa). Ala-856 carries the phosphothreonine modification. Ser-857, Ser-859, and Ser-861 each carry phosphoserine. Ser-862 is subject to Phosphothreonine. Ser-864 is modified (phosphoserine). Tyr-865 is subject to Phosphotyrosine. Position 868 is a phosphoserine (Ser-868). Thr-869 carries the post-translational modification Phosphothreonine. Over residues 875 to 888 the composition is skewed to basic and acidic residues; it reads RNQKSDKKPDREEI. Ser-879 carries the phosphoserine modification. A Glycyl lysine isopeptide (Lys-Gly) (interchain with G-Cter in SUMO2) cross-link involves residue Lys-882. Gln-889 and Ser-895 each carry phosphothreonine. A compositionally biased stretch (polar residues) spans 889–908; that stretch reads QMSNMGSNTKSLDNNYSTPN. Ser-899 is modified (phosphoserine). At Tyr-904 the chain carries Phosphotyrosine. Residues Thr-906, Arg-910, and Thr-916 each carry the phosphothreonine modification. Residues 909–922 are compositionally biased toward basic and acidic residues; the sequence is ERGDHNRTLDRSGD. Residues Ser-920 and Ser-943 each carry the phosphoserine modification.

The protein belongs to the beta-catenin family. As to quaternary structure, belongs to a multiprotein cell-cell adhesion complex that also contains E-cadherin/CDH1, alpha-catenin/CTNNA1, beta-catenin/CTNNB1, and gamma-catenin/JUP. Component of a cadherin:catenin adhesion complex composed of at least of CDH26, beta-catenin/CTNNB1, alpha-catenin/CTNNA1 and p120 catenin/CTNND1. Binds to the C-terminal fragment of PSEN1 and mutually competes for CDH1. Interacts with ZBTB33. Interacts with GLIS2. Interacts with FER. Interacts with NANOS1 (via N-terminal region). Interacts (via N-terminus) with GNA12; the interaction regulates CDH1-mediated cell-cell adhesion. Interacts with GNA13. Interacts with CCDC85B. Interacts with PLPP3; negatively regulates the PLPP3-mediated stabilization of CTNNB1. Interacts with DSG3; the interaction facilitates DSG3 localization and retention at cell-cell junctions. Interacts with CTNND1/p120-catenin; the interaction controls CADH5 endocytosis. Phosphorylated by FER and other protein-tyrosine kinases. Phosphorylated at Ser-288 by PAK5. Dephosphorylated by PTPRJ. In terms of tissue distribution, expressed in vascular endothelium. Melanocytes and melanoma cells primarily express the long isoform 1A, whereas keratinocytes express shorter isoforms, especially 3A. The shortest isoform 4A, is detected in normal keratinocytes and melanocytes, and generally lost from cells derived from squamous cell carcinomas or melanomas. The C-terminal alternatively spliced exon B is present in the p120ctn transcripts in the colon, intestine and prostate, but lost in several tumor tissues derived from these organs.

It localises to the cell junction. The protein localises to the adherens junction. Its subcellular location is the cytoplasm. The protein resides in the nucleus. It is found in the cell membrane. Key regulator of cell-cell adhesion that associates with and regulates the cell adhesion properties of both C-, E- and N-cadherins, being critical for their surface stability. Promotes localization and retention of DSG3 at cell-cell junctions, via its interaction with DSG3. Beside cell-cell adhesion, regulates gene transcription through several transcription factors including ZBTB33/Kaiso2 and GLIS2, and the activity of Rho family GTPases and downstream cytoskeletal dynamics. Implicated both in cell transformation by SRC and in ligand-induced receptor signaling through the EGF, PDGF, CSF-1 and ERBB2 receptors. This Homo sapiens (Human) protein is Catenin delta-1.